The primary structure comprises 281 residues: Phosphate import ATP-binding protein PstB 1 (281 aa).

A disordered region spans residues 1–34; sequence MTENTAETADESSDGGVTATTGAATTTPTTPPEP. The segment covering 15-28 has biased composition (low complexity); it reads GGVTATTGAATTTP. The region spanning 36–276 is the ABC transporter domain; that stretch reads IRARDLDVFY…PEHQRVEEYI (241 aa). An ATP-binding site is contributed by 68–75; sequence GPSGCGKS.

It belongs to the ABC transporter superfamily. Phosphate importer (TC 3.A.1.7) family. In terms of assembly, the complex is composed of two ATP-binding proteins (PstB), two transmembrane proteins (PstC and PstA) and a solute-binding protein (PstS).

It localises to the cell membrane. It catalyses the reaction phosphate(out) + ATP + H2O = ADP + 2 phosphate(in) + H(+). Part of the ABC transporter complex PstSACB involved in phosphate import. Responsible for energy coupling to the transport system. The protein is Phosphate import ATP-binding protein PstB 1 of Halobacterium salinarum (strain ATCC 700922 / JCM 11081 / NRC-1) (Halobacterium halobium).